Consider the following 423-residue polypeptide: Glutamate-1-semialdehyde 2,1-aminomutase (423 aa).

Lys-259 carries the post-translational modification N6-(pyridoxal phosphate)lysine.

This sequence belongs to the class-III pyridoxal-phosphate-dependent aminotransferase family. HemL subfamily. In terms of assembly, homodimer. Pyridoxal 5'-phosphate is required as a cofactor.

It localises to the cytoplasm. It carries out the reaction (S)-4-amino-5-oxopentanoate = 5-aminolevulinate. It functions in the pathway porphyrin-containing compound metabolism; protoporphyrin-IX biosynthesis; 5-aminolevulinate from L-glutamyl-tRNA(Glu): step 2/2. This Thermosipho melanesiensis (strain DSM 12029 / CIP 104789 / BI429) protein is Glutamate-1-semialdehyde 2,1-aminomutase.